The chain runs to 703 residues: MALSHPRPWASLLLVDLALLGLLQSSLGTLLPPGLPGLWLEGTLRLGVLWGLLKVGGLLRLVGTFLPLLCLTNPLFFSLRALVGSTMSTSVVRVASASWGWLLADYGAVALSLAVWAVLSPAGAQEKEPGQENNRALMIRLLRLSKPDLPFLIVAFIFLAMAVWWEMFIPHYSGRVIDILGGDFDPDAFASAIFFMCLFSVGSSLSAGCRGGSFLFAESRINLRIREQLFSSLLRQDLAFFQETKTGELNSRLSSDTSLMSQWLSLNANILLRSLVKVVGLYYFMLQVSPRLTFLSLLDLPLTIAAEKVYNPRHQAVLKEIQDAVAKAGQVVREAVGGLQTVRSFGAEEQEVRRYKEALERCRQLWWRRDLEKSLYLVIQRVMALGMQVLILNVGVQQILAGEVTRGGLLSFLLYQEEVGHHVQNLVYMYGDMLSNVGAAEKVFSYLDRRPNLPNPGTLAPPRLEGRVEFQDVSFSYPSRPEKPVLQGLTFTLHPGKVTALVGPNGSGKSTVAALLQNLYQPTGGQLLLDGEPLVQYDHHYLHRQVVLVGQEPVLFSGSVKDNIAYGLRDCEDAQVMAAAQAACADDFIGEMTNGINTEIGEKGSQLAVGQKQRLAIARALVRNPRVLILDEATSALDAECEQALQTWRSQEDRTMLVIAHRLHTVQNADQVLVLKQGQLVEHDQLRDEQDVYAHLVQQRLEA.

The Lumenal portion of the chain corresponds to 1–6 (MALSHP). The chain crosses the membrane as a helical span at residues 7–27 (RPWASLLLVDLALLGLLQSSL). At 28 to 56 (GTLLPPGLPGLWLEGTLRLGVLWGLLKVG) the chain is on the cytoplasmic side. The chain crosses the membrane as a helical span at residues 57–77 (GLLRLVGTFLPLLCLTNPLFF). Residues 78–98 (SLRALVGSTMSTSVVRVASAS) lie on the Lumenal side of the membrane. The chain crosses the membrane as a helical span at residues 99 to 119 (WGWLLADYGAVALSLAVWAVL). The Cytoplasmic segment spans residues 120–148 (SPAGAQEKEPGQENNRALMIRLLRLSKPD). A helical transmembrane segment spans residues 149–169 (LPFLIVAFIFLAMAVWWEMFI). The ABC transmembrane type-1 domain maps to 152 to 435 (LIVAFIFLAM…LVYMYGDMLS (284 aa)). At 170–187 (PHYSGRVIDILGGDFDPD) the chain is on the lumenal side. The helical transmembrane segment at 188–208 (AFASAIFFMCLFSVGSSLSAG) threads the bilayer. Topologically, residues 209–266 (CRGGSFLFAESRINLRIREQLFSSLLRQDLAFFQETKTGELNSRLSSDTSLMSQWLSL) are cytoplasmic. Residues 267–287 (NANILLRSLVKVVGLYYFMLQ) form a helical membrane-spanning segment. The Lumenal segment spans residues 288–293 (VSPRLT). Residues 294 to 314 (FLSLLDLPLTIAAEKVYNPRH) form a helical membrane-spanning segment. The segment at 301–389 (PLTIAAEKVY…QRVMALGMQV (89 aa)) is part of the peptide-binding site. Over 315 to 374 (QAVLKEIQDAVAKAGQVVREAVGGLQTVRSFGAEEQEVRRYKEALERCRQLWWRRDLEKS) the chain is Cytoplasmic. Residues 375–395 (LYLVIQRVMALGMQVLILNVG) form a helical membrane-spanning segment. The Lumenal portion of the chain corresponds to 396-408 (VQQILAGEVTRGG). A helical membrane pass occupies residues 409-429 (LLSFLLYQEEVGHHVQNLVYM). The part of the peptide-binding site stretch occupies residues 414 to 433 (LYQEEVGHHVQNLVYMYGDM). The Cytoplasmic portion of the chain corresponds to 430-703 (YGDMLSNVGA…AHLVQQRLEA (274 aa)). In terms of domain architecture, ABC transporter spans 468 to 702 (VEFQDVSFSY…YAHLVQQRLE (235 aa)). 503–510 (GPNGSGKS) serves as a coordination point for ATP.

The protein belongs to the ABC transporter superfamily. ABCB family. MHC peptide exporter (TC 3.A.1.209) subfamily. Heterodimer of TAP1 and TAP2 (TAP1-TAP2). A component of the peptide loading complex (PLC), interacts via TAPBP with MHCI heterodimer; this interaction mediates peptide-MHCI assembly. It depends on Mg(2+) as a cofactor.

It localises to the endoplasmic reticulum membrane. It catalyses the reaction a peptide antigen(in) + ATP + H2O = a peptide antigen(out) + ADP + phosphate + H(+). Its function is as follows. ABC transporter associated with antigen processing. In complex with TAP1 mediates unidirectional translocation of peptide antigens from cytosol to endoplasmic reticulum (ER) for loading onto MHC class I (MHCI) molecules. Uses the chemical energy of ATP to export peptides against the concentration gradient. During the transport cycle alternates between 'inward-facing' state with peptide binding site facing the cytosol to 'outward-facing' state with peptide binding site facing the ER lumen. Peptide antigen binding to ATP-loaded TAP1-TAP2 induces a switch to hydrolysis-competent 'outward-facing' conformation ready for peptide loading onto nascent MHCI molecules. Subsequently ATP hydrolysis resets the transporter to the 'inward facing' state for a new cycle. As a component of the peptide loading complex (PLC), acts as a molecular scaffold essential for peptide-MHCI assembly and antigen presentation. This Rattus norvegicus (Rat) protein is Antigen peptide transporter 2 (Tap2).